The chain runs to 515 residues: Cytochrome P450 monooxygenase nsrP (515 aa).

The helical transmembrane segment at 20–40 (FGTAAFLAVLLSALAFLSYTP) threads the bilayer. N-linked (GlcNAc...) asparagine glycans are attached at residues N84, N406, and N411. Heme is bound at residue C452.

It belongs to the cytochrome P450 family. Requires heme as cofactor.

The protein localises to the membrane. It participates in secondary metabolite biosynthesis. Its function is as follows. Cytochrome P450 monooxygenase; part of the gene cluster that mediates the biosynthesis of the tetrahydroxanthone dimer neosartorin, which exhibits antibacterial activity. The two different monomeric units appear to be synthesized by the same set of enzymes, among which the Baeyer-Villiger monooxygenase nsrF is the key enzyme for the divergence of the biosynthetic routes. The pathway begins with the synthesis of atrochrysone thioester by the polyketide synthase nsrB. The atrochrysone carboxyl ACP thioesterase nsrC then breaks the thioester bond and releases the atrochrysone carboxylic acid from AacuL. Atrochrysone carboxylic acid is decarboxylated by the decarboxylase nsrE, and oxidized by the anthrone oxygenase nsrD to yield emodin. Emodin is then reduced to emodin hydroquinone by the oxidoreductase nsrR. A-ring reduction by the short chain dehydrogenase nsrJ, dehydration by the scytalone dehydratase-like protein nsrI and probable spontaneous re-oxidation, results in overall deoxygenation to chrysophanol. The Baeyer-Villiger monooxygenase nsrF accepts chrysophanol as a substrate to insert one oxygen atom at two different positions to yield the precursors of both monomric units. NsrF is promiscuous/flexible in interacting with the 2 (non methylated and methylated) aromatic rings of chrysophanol, thus diverging the biosynthetic pathway at this point. After the hydrolysis of the lactones, methylesterification by the methyltransferase nsrG yields respectively moniliphenone and 2,2',6'-trihydroxy-4-methyl-6-methoxya-cyldiphenylmethanone. The next steps are the hydroxylation by the FAD-dependent monooxygenase nsrK, followed by isomerization by the monooxygenase nsrQ. The short chain dehydrogenase/reductase nsrO then catalyzes the C-5 ketoreduction to give the xanthone skeleton of blennolide C and 5-acetylblennolide A. The acetyltransferase nsrL has a strict substrate specificity and uses only blennolide A but not blennolide C to yield 5-acetylblennolide A as the single-acetylated product. In the final step of the biosynthesis, the heterodimerization of the 2 xanthones, blennolide C and 5-acetylblennolide A, is catalyzed by the cytochrome P450 monooxygenase nsrP. NsrP can utilize at least three different xanthones as its substrates to perform the dimerization reaction. This Aspergillus novofumigatus (strain IBT 16806) protein is Cytochrome P450 monooxygenase nsrP.